The chain runs to 752 residues: Zinc finger protein 425 (752 aa).

In terms of domain architecture, KRAB spans 9 to 80 (VTFDDVALYF…EQGCLDKTRR (72 aa)). 19 C2H2-type zinc fingers span residues 190-212 (YSCY…KRSH), 246-268 (FQCS…QVVH), 274-296 (YPCP…LCLH), 302-324 (FCCG…LRLH), 330-352 (FQCP…LTQH), 358-380 (FHCP…QRTH), 386-408 (FSCG…IRVH), 414-436 (FSCP…GLQH), 442-464 (FQCP…QRLH), 470-492 (FPCA…TRVH), 498-520 (FPCG…LKVH), 526-548 (FSCA…TRLH), 554-576 (FQCP…QRMH), 582-604 (FACG…LRLH), 610-632 (YQCP…LLQH), 638-660 (FSCV…IRVH), 666-688 (FQCP…LYKH), 694-716 (FQCP…LCLH), and 722-744 (FSCD…IAVH).

Belongs to the krueppel C2H2-type zinc-finger protein family.

The protein localises to the nucleus. The protein resides in the cytoplasm. In terms of biological role, acts as a transcriptional repressor. This is Zinc finger protein 425 (ZNF425) from Homo sapiens (Human).